Here is a 235-residue protein sequence, read N- to C-terminus: Ribosomal RNA-processing protein 17 (235 aa).

Residues 49-110 adopt a coiled-coil conformation; that stretch reads QRQKKAQEFI…AKNDKTEDLQ (62 aa). The span at 99 to 108 shows a compositional bias: basic and acidic residues; the sequence is EDAKNDKTED. Disordered stretches follow at residues 99–138 and 209–235; these read EDAKNDKTEDLQVESDESWHGFDSDKDDGDNDNNESSVKP and RVKKFRYLTKNERRINQRKANDNKRRR. 3 positions are modified to phosphoserine: S113, S116, and S122. Over residues 217 to 235 the composition is skewed to basic and acidic residues; it reads TKNERRINQRKANDNKRRR.

This sequence belongs to the RRP17 family.

It localises to the nucleus. It is found in the nucleolus. Essential protein involved in ribosomal RNA processing. The chain is Ribosomal RNA-processing protein 17 (RRP17) from Saccharomyces cerevisiae (strain ATCC 204508 / S288c) (Baker's yeast).